The chain runs to 770 residues: MLKLSFRSLTSRLPRLSTLVVRGYASVANTGIEASNTSENNLNIQEQLNDNDKKRLKQIRNIGISAHIDSGKTTFTERVLYYTGRIKDIHEVRGKDNVGAKMDFMELEREKGITIQSAATHCTWERTVDQIEANEKQKTDFEKSYNINIIDTPGHIDFTIEVERALRVLDGAVLVLCAVSGVQSQTITVDRQMRRYNVPRISFVNKMDRMGADPWKVIQQINTKLKIPAAAVQIPIGQEDKLEGVVDLIQMRAIYNRGSKGEKIEISQQVPENLIELAKEKRSALIEKLADLDEEIADIYVMEEDPTPEQLMGAIRRTTLARKFTPVLMGSALSNVGVQSVLDAVCDYLPNPSEVENIALNAADSEKPVSLVPSSEKPLVALAFKLEEGRFGQLTYLRIYQGTLKRGNYIYNVNSTKKIKVSRLVRMHSNDMEEIEKVEAGGICALFGIECASGDTFTDGSVSYTMTSMFVPEPVISLSLKPKSKDTTSFSKALNRFQREDPTFRVQLDNESKETIISGMGELHLEVYVERMRREYKVDCETGKPRVAFRETLSKKVPFSYLHKKQSGGAGQYAKVEGYIEYMDGVEDESGNVVDCEFINKVTGGTVPTQYIPACEKAFYEALKKGFLIGHPIKNCRFVLEDGAYHPVDSSELAFRLATISAFRTAFLQANPMVLEPIMNVSITAPVEHQGGVIGNLDKRKATIVDSDTDEDEFTLQAEVPLNSMFSYSSDIRALTKGKGEFSMEFLKYLPAPKYVQKELVDAYNKQQQK.

The transit peptide at 1–24 (MLKLSFRSLTSRLPRLSTLVVRGY) directs the protein to the mitochondrion. Residues 57-353 (KQIRNIGISA…AVCDYLPNPS (297 aa)) enclose the tr-type G domain. GTP is bound by residues 66-73 (AHIDSGKT), 151-155 (DTPGH), and 205-208 (NKMD).

It belongs to the TRAFAC class translation factor GTPase superfamily. Classic translation factor GTPase family. EF-G/EF-2 subfamily.

It is found in the mitochondrion. Its pathway is protein biosynthesis; polypeptide chain elongation. In terms of biological role, mitochondrial GTPase that catalyzes the GTP-dependent ribosomal translocation step during translation elongation. During this step, the ribosome changes from the pre-translocational (PRE) to the post-translocational (POST) state as the newly formed A-site-bound peptidyl-tRNA and P-site-bound deacylated tRNA move to the P and E sites, respectively. Catalyzes the coordinated movement of the two tRNA molecules, the mRNA and conformational changes in the ribosome. The polypeptide is Elongation factor G, mitochondrial (mef1) (Schizosaccharomyces pombe (strain 972 / ATCC 24843) (Fission yeast)).